Reading from the N-terminus, the 179-residue chain is Nicotinamide-nucleotide adenylyltransferase (179 aa).

The protein belongs to the archaeal NMN adenylyltransferase family.

It is found in the cytoplasm. The enzyme catalyses beta-nicotinamide D-ribonucleotide + ATP + H(+) = diphosphate + NAD(+). It functions in the pathway cofactor biosynthesis; NAD(+) biosynthesis; NAD(+) from nicotinamide D-ribonucleotide: step 1/1. The chain is Nicotinamide-nucleotide adenylyltransferase from Thermoplasma acidophilum (strain ATCC 25905 / DSM 1728 / JCM 9062 / NBRC 15155 / AMRC-C165).